A 785-amino-acid chain; its full sequence is Tripartite terminase subunit 1 (785 aa).

The segment at 197-225 (CAVCFEELCVTANQGATIARRLADRICNH) adopts a C3H1-type zinc-finger fold. The segment at 433–489 (GGAADAPKGGAGPDDDGDRVAVEEGTRGLGAPGGGGEDEDRRRGPGGQGPETWGDIA) is disordered. 696–703 (FASVYRCG) is a binding site for ATP.

The protein belongs to the herpesviridae TRM1 protein family. Associates with TRM2 and TRM3 to form the tripartite terminase complex. Interacts with portal protein.

It localises to the host nucleus. Component of the molecular motor that translocates viral genomic DNA in empty capsid during DNA packaging. Forms a tripartite terminase complex together with TRM2 and TRM3 in the host cytoplasm. Once the complex reaches the host nucleus, it interacts with the capsid portal vertex. This portal forms a ring in which genomic DNA is translocated into the capsid. TRM1 carries an endonuclease activity that plays an important role for the cleavage of concatemeric viral DNA into unit length genomes. The chain is Tripartite terminase subunit 1 from Human herpesvirus 1 (strain Angelotti) (HHV-1).